The chain runs to 384 residues: Centrosomal protein of 44 kDa (384 aa).

The interval 11-188 is binds with microtubules and centrioles; sequence RKLEQRLRTL…TKCYSSALVE (178 aa). The disordered stretch occupies residues 191–222; sequence EEEEPTSDSEGGSHLEHEMESPFETAETTPNS. A compositionally biased stretch (basic and acidic residues) spans 201–210; sequence GGSHLEHEME. Coiled-coil stretches lie at residues 221–260 and 353–378; these read NSEQ…KGKI and TEDS…SKLL.

Binds to centriolar microtubules.

The protein localises to the cytoplasm. The protein resides in the cytoskeleton. Its subcellular location is the microtubule organizing center. It is found in the centrosome. It localises to the centriole. The protein localises to the spindle pole. The protein resides in the midbody. In terms of biological role, centriole-enriched microtubule-binding protein involved in centriole biogenesis. In collaboration with CEP295 and POC1B, is required for the centriole-to-centrosome conversion by ensuring the formation of bona fide centriole wall. Functions as a linker component that maintains centrosome cohesion. Associates with CROCC and regulates its stability and localization to the centrosome. This is Centrosomal protein of 44 kDa (cep44) from Xenopus laevis (African clawed frog).